Here is a 317-residue protein sequence, read N- to C-terminus: Serpentine receptor class delta-44 (317 aa).

A run of 6 helical transmembrane segments spans residues 5-25 (ILSV…IILI), 90-110 (MFHI…LTTF), 130-150 (ILFI…LVII), 185-205 (RVNG…CLLL), 235-255 (IFGH…SLIT), and 264-284 (FFIF…TMYF).

This sequence belongs to the nematode receptor-like protein srd family.

Its subcellular location is the membrane. The polypeptide is Serpentine receptor class delta-44 (srd-44) (Caenorhabditis elegans).